An 83-amino-acid chain; its full sequence is MQNDAGEFVDLYVPRKCSASNRIIAAKDHASIQMNVAEVDRTTGRFNGQFKTYGICGAIRRMGESDDSILRLAKADGIVSKNF.

Met-1 is modified (N-acetylmethionine). Lys-81 is modified (N6-acetyllysine).

Belongs to the eukaryotic ribosomal protein eS21 family. Component of the 40S small ribosomal subunit.

It is found in the cytoplasm. It localises to the cytosol. The protein resides in the rough endoplasmic reticulum. Functionally, component of the small ribosomal subunit. The ribosome is a large ribonucleoprotein complex responsible for the synthesis of proteins in the cell. In Mus musculus (Mouse), this protein is Small ribosomal subunit protein eS21 (Rps21).